The primary structure comprises 470 residues: Synaptotagmin-17 (470 aa).

Positions 54–112 (PPWLMASRSNDKDGDSVHTASDVPLTPRTNSPDGRRSSSDTSKSTYSLTRRISSLDSRR) are disordered. Residues 92-112 (SDTSKSTYSLTRRISSLDSRR) are compositionally biased toward low complexity. 2 positions are modified to phosphoserine: S114 and S115. 2 consecutive C2 domains span residues 180–306 (QLGM…HWWK) and 317–451 (ELGE…EQWH).

It belongs to the synaptotagmin family.

It is found in the membrane. Its function is as follows. Plays a role in dendrite formation by melanocytes. In Mus musculus (Mouse), this protein is Synaptotagmin-17 (Syt17).